The sequence spans 304 residues: Oxygen-dependent coproporphyrinogen-III oxidase (304 aa).

S95 lines the substrate pocket. A divalent metal cation is bound by residues H99 and H109. The active-site Proton donor is H109. 111–113 (NVR) is a binding site for substrate. The a divalent metal cation site is built by H148 and H178. The segment at 243–278 (YVEFNLVYDRGTLFGLQSGGRTESILMSLPPLVRWR) is important for dimerization. Position 261-263 (261-263 (GGR)) interacts with substrate.

This sequence belongs to the aerobic coproporphyrinogen-III oxidase family. Homodimer. A divalent metal cation is required as a cofactor.

It is found in the cytoplasm. The enzyme catalyses coproporphyrinogen III + O2 + 2 H(+) = protoporphyrinogen IX + 2 CO2 + 2 H2O. Its pathway is porphyrin-containing compound metabolism; protoporphyrin-IX biosynthesis; protoporphyrinogen-IX from coproporphyrinogen-III (O2 route): step 1/1. Its function is as follows. Involved in the heme biosynthesis. Catalyzes the aerobic oxidative decarboxylation of propionate groups of rings A and B of coproporphyrinogen-III to yield the vinyl groups in protoporphyrinogen-IX. This is Oxygen-dependent coproporphyrinogen-III oxidase from Thioalkalivibrio sulfidiphilus (strain HL-EbGR7).